Reading from the N-terminus, the 241-residue chain is Golgi-associated RAB2 interactor protein 6 (241 aa).

It belongs to the GARIN family.

This Homo sapiens (Human) protein is Golgi-associated RAB2 interactor protein 6.